The following is a 246-amino-acid chain: 3-deoxy-manno-octulosonate cytidylyltransferase (246 aa).

Belongs to the KdsB family.

The protein localises to the cytoplasm. The enzyme catalyses 3-deoxy-alpha-D-manno-oct-2-ulosonate + CTP = CMP-3-deoxy-beta-D-manno-octulosonate + diphosphate. Its pathway is nucleotide-sugar biosynthesis; CMP-3-deoxy-D-manno-octulosonate biosynthesis; CMP-3-deoxy-D-manno-octulosonate from 3-deoxy-D-manno-octulosonate and CTP: step 1/1. It participates in bacterial outer membrane biogenesis; lipopolysaccharide biosynthesis. Activates KDO (a required 8-carbon sugar) for incorporation into bacterial lipopolysaccharide in Gram-negative bacteria. This Rickettsia prowazekii (strain Madrid E) protein is 3-deoxy-manno-octulosonate cytidylyltransferase.